A 111-amino-acid chain; its full sequence is Tubulin beta chain (111 aa).

Positions 82 to 111 (SEYQQYQDATAEDEGEFDEEEAEGEGQEYA) are disordered. Residues 91–111 (TAEDEGEFDEEEAEGEGQEYA) are compositionally biased toward acidic residues.

It belongs to the tubulin family. Dimer of alpha and beta chains. A typical microtubule is a hollow water-filled tube with an outer diameter of 25 nm and an inner diameter of 15 nM. Alpha-beta heterodimers associate head-to-tail to form protofilaments running lengthwise along the microtubule wall with the beta-tubulin subunit facing the microtubule plus end conferring a structural polarity. Microtubules usually have 13 protofilaments but different protofilament numbers can be found in some organisms and specialized cells. It depends on Mg(2+) as a cofactor.

Its subcellular location is the cytoplasm. The protein resides in the cytoskeleton. In terms of biological role, tubulin is the major constituent of microtubules, a cylinder consisting of laterally associated linear protofilaments composed of alpha- and beta-tubulin heterodimers. Microtubules grow by the addition of GTP-tubulin dimers to the microtubule end, where a stabilizing cap forms. Below the cap, tubulin dimers are in GDP-bound state, owing to GTPase activity of alpha-tubulin. The protein is Tubulin beta chain of Lymnaea stagnalis (Great pond snail).